The chain runs to 628 residues: Phosphomethylpyrimidine synthase (628 aa).

Residues 1–14 show a composition bias toward polar residues; it reads MTISDIGSQATTHT. A disordered region spans residues 1-37; sequence MTISDIGSQATTHTPVKASKADALKTPAHRSETDARF. Basic and acidic residues predominate over residues 19–37; sequence SKADALKTPAHRSETDARF. Substrate-binding positions include asparagine 260, methionine 289, tyrosine 318, histidine 354, 374–376, 415–418, and glutamate 454; these read SRG and DGLR. Histidine 458 is a Zn(2+) binding site. Tyrosine 481 serves as a coordination point for substrate. Position 522 (histidine 522) interacts with Zn(2+). 3 residues coordinate [4Fe-4S] cluster: cysteine 602, cysteine 605, and cysteine 610.

Belongs to the ThiC family. Homodimer. [4Fe-4S] cluster is required as a cofactor.

It catalyses the reaction 5-amino-1-(5-phospho-beta-D-ribosyl)imidazole + S-adenosyl-L-methionine = 4-amino-2-methyl-5-(phosphooxymethyl)pyrimidine + CO + 5'-deoxyadenosine + formate + L-methionine + 3 H(+). The protein operates within cofactor biosynthesis; thiamine diphosphate biosynthesis. In terms of biological role, catalyzes the synthesis of the hydroxymethylpyrimidine phosphate (HMP-P) moiety of thiamine from aminoimidazole ribotide (AIR) in a radical S-adenosyl-L-methionine (SAM)-dependent reaction. This chain is Phosphomethylpyrimidine synthase, found in Psychrobacter cryohalolentis (strain ATCC BAA-1226 / DSM 17306 / VKM B-2378 / K5).